Reading from the N-terminus, the 380-residue chain is Chaperone protein DnaJ (380 aa).

In terms of domain architecture, J spans 5 to 70 (DYYEILGVTK…QKRAAYDRFG (66 aa)). The CR-type zinc-finger motif lies at 137-215 (GKAETIKIPT…CQGAGRVNRE (79 aa)). Zn(2+) contacts are provided by C150, C153, C167, C170, C189, C192, C203, and C206. 4 CXXCXGXG motif repeats span residues 150–157 (CEVCDGSG), 167–174 (CPTCAGYG), 189–196 (CPNCHGRG), and 203–210 (CTACQGAG).

Belongs to the DnaJ family. As to quaternary structure, homodimer. It depends on Zn(2+) as a cofactor.

The protein resides in the cytoplasm. Functionally, participates actively in the response to hyperosmotic and heat shock by preventing the aggregation of stress-denatured proteins and by disaggregating proteins, also in an autonomous, DnaK-independent fashion. Unfolded proteins bind initially to DnaJ; upon interaction with the DnaJ-bound protein, DnaK hydrolyzes its bound ATP, resulting in the formation of a stable complex. GrpE releases ADP from DnaK; ATP binding to DnaK triggers the release of the substrate protein, thus completing the reaction cycle. Several rounds of ATP-dependent interactions between DnaJ, DnaK and GrpE are required for fully efficient folding. Also involved, together with DnaK and GrpE, in the DNA replication of plasmids through activation of initiation proteins. The chain is Chaperone protein DnaJ from Methylobacterium radiotolerans (strain ATCC 27329 / DSM 1819 / JCM 2831 / NBRC 15690 / NCIMB 10815 / 0-1).